The following is a 552-amino-acid chain: Leucine-rich repeat-containing protein 31 (552 aa).

Positions 1–65 (MSQTRKKTSS…SETAKPLSSE (65 aa)) are disordered. Positions 31–41 (ESRKEDNDLKT) are enriched in basic and acidic residues. The segment covering 42–58 (SDSQPSDWIQKTATSET) has biased composition (polar residues). LRR repeat units follow at residues 227-246 (SLEV…LNSI), 255-275 (NLKV…KILD), 283-293 (ELRKLDLSCNK), 311-331 (HLQV…MSLT), 339-360 (NLQE…NLLS), 367-387 (ALKS…TALA), 395-415 (ALEV…KLLL), 423-443 (SLQV…ALLA), and 453-475 (KLQK…MFCQ).

In Homo sapiens (Human), this protein is Leucine-rich repeat-containing protein 31 (LRRC31).